The chain runs to 688 residues: Chaperone protein dnaK1 (688 aa).

Phosphothreonine; by autocatalysis is present on T198. A compositionally biased stretch (basic and acidic residues) spans 630–661 (DLPRDSYRERDAYNNRDYGRDYGRDYGRDSRP). A disordered region spans residues 630-688 (DLPRDSYRERDAYNNRDYGRDYGRDYGRDSRPSYDNSRPPRKSPRPSYQDNWDDDDDWL).

This sequence belongs to the heat shock protein 70 family.

In terms of biological role, acts as a chaperone. This is Chaperone protein dnaK1 (dnaK1) from Nostoc sp. (strain PCC 7120 / SAG 25.82 / UTEX 2576).